The sequence spans 626 residues: MFKNAKEFVQYANKLKTLREKKLNGVSIYVCVGTGCTAKGALKVYSAFEEELKKRNLLGQVTLEKIDDDKVTLNRTGCCGRCSSGPLVKIMPYRFFYSNVAPEDVPEIVDRTVLKGEPIERLFLTDPLTGEKVPRIEDTTLFKNQDFYIMEAIGESECDSIEDYIARSGYESLVKALTSMTPEEIIETVKASGLRGRGGGGFPTGLKWEFTRKAQGDIKFVVCNGDEGDPGAFMNRTLLERDPHLVLEGMIIAGYAVGAQKGYAYIRAEYPFAVKMFKKAIEDARKLGLLGENILGTGFSFDLEVKEGAGAFVCGEETALLASIEGKRGMPRPKPPFPAQSGLWGKPTLINNVETYANIPRILRDGVENYRKRGTENSPGTKMFSVAGPLKATGIIEVEFGTTLRDIIYNICGGFVEGEEFKAVQIGGPSGACLSEDFIDMPLDYDTLKKADAMVGSGGIVVITKKTCMVEVARFFLDFTKRESCGKCVPCREGTMQAYNILEKFTHGKATYEDLKTLEHLSKTIKTASLCGLGKTAPNPILSTLKLFREEYIAHIEGECPSGMCTAFKKYVINPDICKGCGLCARSCPQNAITGERGKPYTIDQEKCVKCGLCASKCPFKAIELV.

198–201 (GGGG) is an NAD(+) binding site. Residues Lys-207 and 224–228 (NGDEG) contribute to the FMN site. Asp-229 serves as a coordination point for NAD(+). FMN contacts are provided by residues 312–317 (FVCGEE) and 350–352 (INN). Residues Cys-485, Cys-488, Cys-491, Cys-531, Cys-578, Cys-581, Cys-584, Cys-588, Cys-608, Cys-611, Cys-614, and Cys-618 each contribute to the [4Fe-4S] cluster site. 2 4Fe-4S ferredoxin-type domains span residues 569 to 598 (KKYVINPDICKGCGLCARSCPQNAITGERG) and 599 to 626 (KPYTIDQEKCVKCGLCASKCPFKAIELV).

The protein belongs to the complex I 51 kDa subunit family. As to quaternary structure, heterotrimer composed of HydA (alpha subunit), HydB (beta subunit) and HydC (gamma subunit). Near neutral and acidic pH conditions favor oligomerization of the heterotrimeric holoenzyme. [2Fe-2S] cluster is required as a cofactor. The cofactor is [4Fe-4S] cluster. FMN serves as cofactor.

It is found in the cytoplasm. The catalysed reaction is 2 H2 + 2 oxidized [2Fe-2S]-[ferredoxin] + NAD(+) = 2 reduced [2Fe-2S]-[ferredoxin] + NADH + 3 H(+). Functionally, catalyzes the oxidation of the physiological electron carriers NADH and reduced ferredoxin, coupled to the production of H(2). Acts as a bifurcating [FeFe] hydrogenase, which uses the exergonic oxidation of reduced ferredoxin to drive the unfavorable oxidation of NADH to produce H(2). The beta subunit contains flavin- and NAD-binding sites and is potentially the site for NADH oxidation, with the subsequent shuttling of electrons to the alpha subunit. In Thermotoga maritima (strain ATCC 43589 / DSM 3109 / JCM 10099 / NBRC 100826 / MSB8), this protein is Bifurcating [FeFe] hydrogenase beta subunit.